Reading from the N-terminus, the 139-residue chain is D-ribose pyranase (139 aa).

The Proton donor role is filled by His20. Substrate contacts are provided by residues Asp28, His106, and 128–130 (YAN).

It belongs to the RbsD / FucU family. RbsD subfamily. In terms of assembly, homodecamer.

The protein resides in the cytoplasm. It carries out the reaction beta-D-ribopyranose = beta-D-ribofuranose. Its pathway is carbohydrate metabolism; D-ribose degradation; D-ribose 5-phosphate from beta-D-ribopyranose: step 1/2. Catalyzes the interconversion of beta-pyran and beta-furan forms of D-ribose. The protein is D-ribose pyranase of Actinobacillus pleuropneumoniae serotype 7 (strain AP76).